We begin with the raw amino-acid sequence, 189 residues long: Casparian strip membrane protein 1 (189 aa).

The Cytoplasmic portion of the chain corresponds to 1–25; it reads MMQAESGSAEAKGPLPPPVGRKRRG. A helical transmembrane segment spans residues 26-46; it reads LGILDFLLRLLAIGATLSAAI. Residues 47-73 are Extracellular-facing; sequence TMGTTNETLQFFTQFFQFKARFYDLSA. Residue asparagine 52 is glycosylated (N-linked (GlcNAc...) asparagine). The helical transmembrane segment at 74 to 94 threads the bilayer; that stretch reads FIYFVIANAIVGGYLLLSLPI. Topologically, residues 95–108 are cytoplasmic; sequence SILNIVRPRAASSR. The helical transmembrane segment at 109–129 threads the bilayer; the sequence is VFLIFFDTVMVAVCTSGAAAA. At 130-158 the chain is on the extracellular side; sequence VAILYVARKGNSRTNWFAICQRFNSFCNQ. A helical membrane pass occupies residues 159–179; it reads AIGAVSASFAGVVFLILLVLL. Residues 180–189 lie on the Cytoplasmic side of the membrane; the sequence is SASTLYRRRP.

It belongs to the Casparian strip membrane proteins (CASP) family. As to quaternary structure, homodimer and heterodimers.

The protein localises to the cell membrane. Functionally, regulates membrane-cell wall junctions and localized cell wall deposition. Required for establishment of the Casparian strip membrane domain (CSD) and the subsequent formation of Casparian strips, a cell wall modification of the root endodermis that determines an apoplastic barrier between the intraorganismal apoplasm and the extraorganismal apoplasm and prevents lateral diffusion. This chain is Casparian strip membrane protein 1, found in Picea glauca (White spruce).